The primary structure comprises 671 residues: TOM1-like protein 6 (671 aa).

N-acetylalanine is present on Ala2. One can recognise a VHS domain in the interval 15-144 (ATSDLLLGPD…ELRRSGVEFP (130 aa)). Residue Ser147 is modified to Phosphoserine. The GAT domain maps to 229–317 (EVEGLSLSSI…LLAKHDAIAS (89 aa)). Disordered regions lie at residues 320-620 (PLPV…VGQK) and 636-671 (GSAD…RKMI). Over residues 334–362 (ASKPADSSPKSSEAKDSSSIAGSSSPIPA) the composition is skewed to low complexity. A compositionally biased stretch (acidic residues) spans 372 to 382 (DEEYEEEEDEF). The segment covering 395–405 (SVTTDPTSLES) has biased composition (polar residues). Residues 407–417 (NAASNALALAL) are compositionally biased toward low complexity. Pro residues predominate over residues 444-459 (STPPAPSSQPSPPPPA). Residues 483–554 (AQQQQPQQPQ…QPSTRPQNPY (72 aa)) show a composition bias toward low complexity. Composition is skewed to polar residues over residues 562–598 (ASTS…NSFP) and 605–616 (QATSTASNSGVS). Ser596 carries the post-translational modification Phosphoserine. Residues 647–663 (NSSNGSQNLSGSQTQQS) are compositionally biased toward low complexity.

This sequence belongs to the TOM1 family. In terms of tissue distribution, ubiquitously expressed.

The protein resides in the endosome. Its subcellular location is the multivesicular body. It localises to the cytoplasm. It is found in the early endosome membrane. In terms of biological role, acts as a gatekeeper for degradative protein sorting to the vacuole. Plays a role in recognition of ubiquitinated PIN2 auxin carrier at the plasma membrane and further to its endocytic sorting. Binds ubiquitin in vitro. Might contribute to the loading of the ESCRT machinery. The protein is TOM1-like protein 6 of Arabidopsis thaliana (Mouse-ear cress).